The following is a 1892-amino-acid chain: MATILPPPGTALFRHFTRQSLATIERLKEETLIAPKAGAHEEEEPPTPNPDLEAGKSLPMIFGDPPSELLGTPLEDIDPFYKAQKTFVVVTKGNTIYRFNAEPACYILSPFSLVRRGAIKILIHSLFSTLIMITILSNCVFMTMSNPPAWSKTVEYVFTGIYTFEATVKVLSRGFCVGPFTFLRDPWNWLDFMVISMAYITEFVDLGNVSALRTFRVLRALKTITVIPGLKTIVAALIQSVKKMVDVMILTVFALAVFALVGLQLFMGNLRHKCIRWPIANETASELFNGTVFNDTLSYNDTTWLNDTLDSNSTFDFTEYIENAENQYFLEGSKDALLCGNSTDAGKCPEGYLCMKAGRNPNYGYTSFDSFGWAFLALFRLMTQDNWESLFQLTLRAAGQTYMLFFVVVIFLGSFYLINLILAVVAMAYDEQNQASQQEAKEKEEEFQRLLEQLKNQEQAQVLGSRASLTSKKSVSLTGSDVADDEQSLENNEALKDCNGRPIPRLIIRAPTMKESAADYELREKEESSVHSVLHLDEPGLRERSASVATAAASVATAAASVATAAAMEELEEAQRPCPPIWYRFADIFLKWNCCEKWVVFKKWVHFVVMDPFVDLAITICIVLNTLFMAMEHYPMTEEFDYMLSVGNLVFTGIFAAEMFFKLIAMDPYYYFQVGWNIFDSIIVTLSLVELGLANVQGLSVLRSFRLLRVFKLAKSWPTLNMLIKIIGNSVGALGNLTLVLAIIVFIFAVVGMQLFGKSYKDCVCKISSDCELPRWHMNDFFHSFLIVFRILCGEWIETMWDCMEVAGAGMCLVVFMMVMVIGNLVVLNLFLALLLSSFSGDNLSVGDDDGELNNLQIAIGRITRGGNWLKAFLIGTVQRVLGREPQKPAEEDPADEGEGKTEGMEMNHLDGFKLADGIANCLVGGQPSGVTLDGESSITVPIALGESDSENPSEDDDDQEDDVDSEVTCEENEHHSDGVEDEFGVLQHVKLMGALTDGDSSVCSTVDYQPPEPEVQEEEEEEPDLVEPEACFTDNCVKRWPCLNVDISQGKGKKWWNLRKTCFTIVEHDWFETFIIFMILLSSGALAFEDIYIERRRTVKIVLEFADKVFTFIFVIEMLLKWVAYGFKTYFTNAWCWLDFFIVDISLISLSANLMGFSDLGPIKSLRTLRALRPLRALSRFEGMRVVVNALIGAIPSIFNVLLVCLIFWLIFSIMGVNLFAGKFYRCINTTTAELFPISVVNNKSDCVALQEATQEARWVNVKVNYDNVAKGYLSLLQIATFKGWMDIMYPAVDSREVEEQPSYEINLYMYIYFVIFIIFGSFFTLNLFIGVIIDNFNQQKKKLGDKDIFMTEEQKKYYEAMKKLGSKKPQKPIPRPANLIQGLVFDFISQQFFDIFIMVLICLNMVTMMVETDDQSPAKEDFLFKVNVAFIVVFTGECTLKLFALRHYFFTNGWNIFDFIVVILSIAGTMLSDIIEKYFVSPTLFRVIRLARIGRILRLIKGARGIRTLLFALMMSLPALFNIGLLLFLIMFIFSIFGMSNFAYVKKEAGINDMFNFETFGSSIICLFQITTSAGWDTLLLPMLNKEPPDCDPAFENPGTDVKGNCGNPMMGMVFFCSYIIISFLVVVNMYIAIILENFNVAQEESGDVLCEEDFEMFNETWEKFDTGGTQFIEYSQLSDFCDALQEPLRVAKPNRQRLIEMDLPLVIGDRIHCVDVLLAVTQEVLGDTIEMVAMRESIEAKFNLNNPTSASYAPITTTVRQKEEDMAAVVIQRAYRNHLHKRGIHHAAYIQRSKTGRKAASEDAPEKEGLLAKKMGALYGSDADLADEVEGLRRRPDPQTRCSGARCSPEPPEPNIILVPVEITNELLLHSAPSQQSSPTQTILRETNV.

The Cytoplasmic segment spans residues 1-125; that stretch reads MATILPPPGT…RGAIKILIHS (125 aa). Positions 34 to 54 are disordered; the sequence is APKAGAHEEEEPPTPNPDLEA. The I repeat unit spans residues 107–433; that stretch reads ILSPFSLVRR…VVAMAYDEQN (327 aa). The helical transmembrane segment at 126–144 threads the bilayer; sequence LFSTLIMITILSNCVFMTM. The Extracellular portion of the chain corresponds to 145–151; that stretch reads SNPPAWS. Residues 152–172 form a helical membrane-spanning segment; that stretch reads KTVEYVFTGIYTFEATVKVLS. Over 173-186 the chain is Cytoplasmic; that stretch reads RGFCVGPFTFLRDP. A helical membrane pass occupies residues 187-204; sequence WNWLDFMVISMAYITEFV. The Extracellular segment spans residues 205-210; it reads DLGNVS. N208 is a glycosylation site (N-linked (GlcNAc...) asparagine). The helical transmembrane segment at 211–227 threads the bilayer; the sequence is ALRTFRVLRALKTITVI. Residues 228 to 246 lie on the Cytoplasmic side of the membrane; sequence PGLKTIVAALIQSVKKMVD. A helical transmembrane segment spans residues 247-266; that stretch reads VMILTVFALAVFALVGLQLF. Topologically, residues 267–370 are extracellular; sequence MGNLRHKCIR…PNYGYTSFDS (104 aa). The cysteines at positions 274 and 339 are disulfide-linked. 3 N-linked (GlcNAc...) asparagine glycosylation sites follow: N281, N294, and N341. C348 and C354 are oxidised to a cystine. The segment at residues 371–395 is an intramembrane region (pore-forming); the sequence is FGWAFLALFRLMTQDNWESLFQLTL. Residues 396–402 are Extracellular-facing; the sequence is RAAGQTY. The chain crosses the membrane as a helical span at residues 403 to 423; it reads MLFFVVVIFLGSFYLINLILA. The Cytoplasmic portion of the chain corresponds to 424-612; the sequence is VVAMAYDEQN…KWVHFVVMDP (189 aa). The II repeat unit spans residues 594 to 866; it reads CCEKWVVFKK…QIAIGRITRG (273 aa). A helical transmembrane segment spans residues 613-631; sequence FVDLAITICIVLNTLFMAM. Residues 632–642 lie on the Extracellular side of the membrane; it reads EHYPMTEEFDY. Residues 643 to 662 traverse the membrane as a helical segment; that stretch reads MLSVGNLVFTGIFAAEMFFK. The Cytoplasmic segment spans residues 663 to 676; that stretch reads LIAMDPYYYFQVGW. A helical transmembrane segment spans residues 677–696; it reads NIFDSIIVTLSLVELGLANV. Residues 697–698 are Extracellular-facing; the sequence is QG. Residues 699 to 716 form a helical membrane-spanning segment; sequence LSVLRSFRLLRVFKLAKS. Topologically, residues 717-732 are cytoplasmic; that stretch reads WPTLNMLIKIIGNSVG. Residues 733 to 751 form a helical membrane-spanning segment; that stretch reads ALGNLTLVLAIIVFIFAVV. The Extracellular segment spans residues 752-780; the sequence is GMQLFGKSYKDCVCKISSDCELPRWHMND. C765 and C771 form a disulfide bridge. The pore-forming intramembrane region spans 781–801; it reads FFHSFLIVFRILCGEWIETMW. The Extracellular segment spans residues 802 to 812; sequence DCMEVAGAGMC. A disulfide bridge links C803 with C812. The helical transmembrane segment at 813–831 threads the bilayer; sequence LVVFMMVMVIGNLVVLNLF. The Cytoplasmic portion of the chain corresponds to 832-1071; the sequence is LALLLSSFSG…TCFTIVEHDW (240 aa). Disordered stretches follow at residues 884-905 and 945-982; these read REPQKPAEEDPADEGEGKTEGM and LGESDSENPSEDDDDQEDDVDSEVTCEENEHHSDGVED. Residues 948-971 are compositionally biased toward acidic residues; it reads SDSENPSEDDDDQEDDVDSEVTCE. The III repeat unit spans residues 1052–1366; the sequence is KGKKWWNLRK…KKYYEAMKKL (315 aa). The helical transmembrane segment at 1072-1089 threads the bilayer; the sequence is FETFIIFMILLSSGALAF. Residues 1090–1102 lie on the Extracellular side of the membrane; that stretch reads EDIYIERRRTVKI. Residues 1103–1121 form a helical membrane-spanning segment; sequence VLEFADKVFTFIFVIEMLL. At 1122–1135 the chain is on the cytoplasmic side; sequence KWVAYGFKTYFTNA. Residues 1136 to 1154 traverse the membrane as a helical segment; sequence WCWLDFFIVDISLISLSAN. Over 1155-1162 the chain is Extracellular; it reads LMGFSDLG. A helical membrane pass occupies residues 1163–1181; it reads PIKSLRTLRALRPLRALSR. Residues 1182 to 1198 lie on the Cytoplasmic side of the membrane; sequence FEGMRVVVNALIGAIPS. Residues 1199–1218 form a helical membrane-spanning segment; sequence IFNVLLVCLIFWLIFSIMGV. The Extracellular segment spans residues 1219–1270; the sequence is NLFAGKFYRCINTTTAELFPISVVNNKSDCVALQEATQEARWVNVKVNYDNV. The cysteines at positions 1228 and 1248 are disulfide-linked. 2 N-linked (GlcNAc...) asparagine glycosylation sites follow: N1230 and N1244. An intramembrane region (pore-forming) is located at residues 1271–1292; that stretch reads AKGYLSLLQIATFKGWMDIMYP. Topologically, residues 1293-1309 are extracellular; sequence AVDSREVEEQPSYEINL. Residues 1310–1331 form a helical membrane-spanning segment; sequence YMYIYFVIFIIFGSFFTLNLFI. At 1332–1394 the chain is on the cytoplasmic side; it reads GVIIDNFNQQ…LVFDFISQQF (63 aa). The segment at 1350-1352 is important for rapid channel inactivation; it reads IFM. Residues 1375–1673 form an IV repeat; sequence IPRPANLIQG…WEKFDTGGTQ (299 aa). The helical transmembrane segment at 1395-1412 threads the bilayer; it reads FDIFIMVLICLNMVTMMV. Residues 1413-1423 are Extracellular-facing; the sequence is ETDDQSPAKED. The helical transmembrane segment at 1424 to 1442 threads the bilayer; that stretch reads FLFKVNVAFIVVFTGECTL. Residues 1443–1454 are Cytoplasmic-facing; sequence KLFALRHYFFTN. A helical membrane pass occupies residues 1455–1472; sequence GWNIFDFIVVILSIAGTM. At 1473-1485 the chain is on the extracellular side; that stretch reads LSDIIEKYFVSPT. A helical transmembrane segment spans residues 1486-1502; the sequence is LFRVIRLARIGRILRLI. The Cytoplasmic segment spans residues 1503–1521; sequence KGARGIRTLLFALMMSLPA. The helical transmembrane segment at 1522–1539 threads the bilayer; the sequence is LFNIGLLLFLIMFIFSIF. Residues 1540-1561 are Extracellular-facing; it reads GMSNFAYVKKEAGINDMFNFET. An intramembrane region (pore-forming) is located at residues 1562–1584; the sequence is FGSSIICLFQITTSAGWDTLLLP. At 1585–1614 the chain is on the extracellular side; it reads MLNKEPPDCDPAFENPGTDVKGNCGNPMMG. C1593 and C1608 are joined by a disulfide. Residues 1615 to 1637 form a helical membrane-spanning segment; it reads MVFFCSYIIISFLVVVNMYIAII. The Cytoplasmic segment spans residues 1638 to 1892; that stretch reads LENFNVAQEE…TQTILRETNV (255 aa). Positions 1767–1796 constitute an IQ domain; it reads EDMAAVVIQRAYRNHLHKRGIHHAAYIQRS. The segment at 1836–1856 is disordered; the sequence is RRRPDPQTRCSGARCSPEPPE.

The protein belongs to the sodium channel (TC 1.A.1.10) family. Nav1.4/SCN4A subfamily. As to quaternary structure, voltage-gated sodium (Nav) channels consist of an ion-conducting alpha subunit which is functional on its own associated with regulatory beta subunits.

It localises to the cell membrane. The enzyme catalyses Na(+)(in) = Na(+)(out). Functionally, pore-forming subunit of a voltage-gated sodium (Nav) channel that directly mediates the depolarizing phase of action potentials in excitable membranes. Navs, also called VGSCs (voltage-gated sodium channels) or VDSCs (voltage-dependent sodium channels), operate by switching between closed and open conformations depending on the voltage difference across the membrane. In the open conformation they allow Na(+) ions to selectively pass through the pore, along their electrochemical gradient. The influx of Na+ ions provokes membrane depolarization, initiating the propagation of electrical signals throughout cells and tissues. The protein is Sodium channel protein type 4 subunit alpha A (scn4aa) of Takifugu rubripes (Japanese pufferfish).